The chain runs to 546 residues: Membrane protein insertase YidC (546 aa).

Residues 6–26 (NLLLIALLFVSFMIWQAWQVD) traverse the membrane as a helical segment. Positions 30 to 44 (QPTAQTTQQTTNTAT) are enriched in low complexity. The interval 30-55 (QPTAQTTQQTTNTATGDKASQAVPGS) is disordered. The next 4 membrane-spanning stretches (helical) occupy residues 344-364 (KFIHSFVGNWGFSIIVITFIV), 419-439 (LGGCLPLIIQMPIFLALYYML), 457-477 (LSAQDPYYILPILMGITMYFI), and 498-518 (PVIFTVFFLWFPAGLVLYYIV).

Belongs to the OXA1/ALB3/YidC family. Type 1 subfamily. Interacts with the Sec translocase complex via SecD. Specifically interacts with transmembrane segments of nascent integral membrane proteins during membrane integration.

Its subcellular location is the cell inner membrane. Required for the insertion and/or proper folding and/or complex formation of integral membrane proteins into the membrane. Involved in integration of membrane proteins that insert both dependently and independently of the Sec translocase complex, as well as at least some lipoproteins. Aids folding of multispanning membrane proteins. The polypeptide is Membrane protein insertase YidC (Yersinia pestis).